The chain runs to 87 residues: MKPNIHPEYRTVVFHDTSIDEYFKIGSTIKTDREIELDGVTYPYVTIDVSSKSHPFYTGKLRTVASEGNVARFTQRFGRFVSTKKGA.

The protein belongs to the bacterial ribosomal protein bL31 family. Type B subfamily. Part of the 50S ribosomal subunit.

The chain is Large ribosomal subunit protein bL31B from Escherichia coli O9:H4 (strain HS).